The sequence spans 425 residues: Serine hydroxymethyltransferase 2 (425 aa).

Residues Leu121 and 125-127 (GHL) contribute to the (6S)-5,6,7,8-tetrahydrofolate site. At Lys230 the chain carries N6-(pyridoxal phosphate)lysine.

Belongs to the SHMT family. In terms of assembly, homodimer. Pyridoxal 5'-phosphate serves as cofactor.

The protein localises to the cytoplasm. The enzyme catalyses (6R)-5,10-methylene-5,6,7,8-tetrahydrofolate + glycine + H2O = (6S)-5,6,7,8-tetrahydrofolate + L-serine. Its pathway is one-carbon metabolism; tetrahydrofolate interconversion. It participates in amino-acid biosynthesis; glycine biosynthesis; glycine from L-serine: step 1/1. Its function is as follows. Catalyzes the reversible interconversion of serine and glycine with tetrahydrofolate (THF) serving as the one-carbon carrier. This reaction serves as the major source of one-carbon groups required for the biosynthesis of purines, thymidylate, methionine, and other important biomolecules. Also exhibits THF-independent aldolase activity toward beta-hydroxyamino acids, producing glycine and aldehydes, via a retro-aldol mechanism. The chain is Serine hydroxymethyltransferase 2 from Mycobacterium tuberculosis (strain CDC 1551 / Oshkosh).